The primary structure comprises 686 residues: Osmo-dependent choline transporter BetT2 (686 aa).

Over methionine 1–arginine 22 the chain is Cytoplasmic. Residues valine 23–asparagine 43 traverse the membrane as a helical segment. Residues aspartate 44–threonine 60 are Periplasmic-facing. Residues phenylalanine 61–cysteine 81 traverse the membrane as a helical segment. The Cytoplasmic portion of the chain corresponds to serine 82–leucine 100. A helical membrane pass occupies residues leucine 101–valine 121. The Periplasmic segment spans residues alanine 122–leucine 150. A helical transmembrane segment spans residues phenylalanine 151–phenylalanine 171. Over serine 172–threonine 203 the chain is Cytoplasmic. Residues alanine 204–leucine 224 traverse the membrane as a helical segment. The Periplasmic portion of the chain corresponds to asparagine 225–asparagine 237. Residues leucine 238–serine 258 form a helical membrane-spanning segment. The Cytoplasmic portion of the chain corresponds to glycine 259 to arginine 265. Residues isoleucine 266–glycine 286 form a helical membrane-spanning segment. At asparagine 287–serine 325 the chain is on the periplasmic side. The chain crosses the membrane as a helical span at residues tryptophan 326 to alanine 346. The Cytoplasmic portion of the chain corresponds to arginine 347–glutamate 356. Residues phenylalanine 357–glycine 377 form a helical membrane-spanning segment. Over asparagine 378–proline 412 the chain is Periplasmic. The helical transmembrane segment at tryptophan 413 to alanine 433 threads the bilayer. The Cytoplasmic portion of the chain corresponds to aspartate 434–serine 459. The helical transmembrane segment at valine 460–threonine 480 threads the bilayer. Topologically, residues alanine 481–asparagine 484 are periplasmic. The chain crosses the membrane as a helical span at residues alanine 485–tyrosine 505. The Cytoplasmic segment spans residues lysine 506 to alanine 686.

It belongs to the BCCT transporter (TC 2.A.15) family.

The protein resides in the cell inner membrane. Functionally, uptake of choline in the presence of high salinity. May primarily serve for osmoprotection. The sequence is that of Osmo-dependent choline transporter BetT2 from Acinetobacter baylyi (strain ATCC 33305 / BD413 / ADP1).